Consider the following 1024-residue polypeptide: Beta-galactosidase (1024 aa).

Substrate contacts are provided by Asn-103 and Asp-202. Position 202 (Asp-202) interacts with Na(+). Mg(2+) contacts are provided by Glu-417, His-419, and Glu-462. Substrate is bound by residues Glu-462 and Glu-538–His-541. The Proton donor role is filled by Glu-462. Glu-538 functions as the Nucleophile in the catalytic mechanism. Residue Asn-598 participates in Mg(2+) binding. The Na(+) site is built by Phe-602 and Asn-605. Substrate-binding residues include Asn-605 and Trp-1000.

It belongs to the glycosyl hydrolase 2 family. As to quaternary structure, homotetramer. Requires Mg(2+) as cofactor. The cofactor is Na(+).

The enzyme catalyses Hydrolysis of terminal non-reducing beta-D-galactose residues in beta-D-galactosides.. In Escherichia coli O1:K1 / APEC, this protein is Beta-galactosidase.